The chain runs to 477 residues: V-type ATP synthase beta chain (477 aa).

This sequence belongs to the ATPase alpha/beta chains family.

Functionally, produces ATP from ADP in the presence of a proton gradient across the membrane. The V-type beta chain is a regulatory subunit. This Anaeromyxobacter dehalogenans (strain 2CP-1 / ATCC BAA-258) protein is V-type ATP synthase beta chain.